We begin with the raw amino-acid sequence, 1380 residues long: DNA-directed RNA polymerase subunit beta (1380 aa).

This sequence belongs to the RNA polymerase beta chain family. The RNAP catalytic core consists of 2 alpha, 1 beta, 1 beta' and 1 omega subunit. When a sigma factor is associated with the core the holoenzyme is formed, which can initiate transcription.

It catalyses the reaction RNA(n) + a ribonucleoside 5'-triphosphate = RNA(n+1) + diphosphate. DNA-dependent RNA polymerase catalyzes the transcription of DNA into RNA using the four ribonucleoside triphosphates as substrates. This chain is DNA-directed RNA polymerase subunit beta, found in Ehrlichia canis (strain Jake).